We begin with the raw amino-acid sequence, 301 residues long: Lipoyl synthase (301 aa).

Residues Cys-53, Cys-58, Cys-64, Cys-79, Cys-83, Cys-86, and Ser-290 each contribute to the [4Fe-4S] cluster site. In terms of domain architecture, Radical SAM core spans 65-279 (WSRKTATYML…RIYGKSIGFK (215 aa)).

The protein belongs to the radical SAM superfamily. Lipoyl synthase family. The cofactor is [4Fe-4S] cluster.

It localises to the cytoplasm. It carries out the reaction [[Fe-S] cluster scaffold protein carrying a second [4Fe-4S](2+) cluster] + N(6)-octanoyl-L-lysyl-[protein] + 2 oxidized [2Fe-2S]-[ferredoxin] + 2 S-adenosyl-L-methionine + 4 H(+) = [[Fe-S] cluster scaffold protein] + N(6)-[(R)-dihydrolipoyl]-L-lysyl-[protein] + 4 Fe(3+) + 2 hydrogen sulfide + 2 5'-deoxyadenosine + 2 L-methionine + 2 reduced [2Fe-2S]-[ferredoxin]. Its pathway is protein modification; protein lipoylation via endogenous pathway; protein N(6)-(lipoyl)lysine from octanoyl-[acyl-carrier-protein]: step 2/2. In terms of biological role, catalyzes the radical-mediated insertion of two sulfur atoms into the C-6 and C-8 positions of the octanoyl moiety bound to the lipoyl domains of lipoate-dependent enzymes, thereby converting the octanoylated domains into lipoylated derivatives. The protein is Lipoyl synthase of Leptospira interrogans serogroup Icterohaemorrhagiae serovar copenhageni (strain Fiocruz L1-130).